The sequence spans 1328 residues: Peroxidasin homolog pxn-2 (1328 aa).

Positions 1–16 (MLLEFLLLIGISLSTA) are cleaved as a signal peptide. The LRRNT domain maps to 17–45 (CPSECRCAGLDVHCEGKNLTAIPGHIPIA). Asn34 carries an N-linked (GlcNAc...) asparagine glycan. 6 LRR repeats span residues 42-66 (IPIA…NFQA), 67-90 (LPNL…LLDS), 92-114 (PGLK…STAP), 116-137 (ALVS…LVSH), 138-161 (SPYM…FFNS), and 164-191 (VPTL…QFAD). Asn77 carries an N-linked (GlcNAc...) asparagine glycan. N-linked (GlcNAc...) asparagine glycosylation is present at Asn220. The segment at 305-332 (KKMQASSSTEPPITTTTMEPMTTSTMDS) is disordered. Residues 310–332 (SSSTEPPITTTTMEPMTTSTMDS) are compositionally biased toward low complexity. Ig-like C2-type domains are found at residues 346–438 (PEID…FSVS) and 445–532 (PVII…ANLL). Cys373 and Cys422 are oxidised to a cystine. N-linked (GlcNAc...) asparagine glycosylation is found at Asn403 and Asn455. A disulfide bridge links Cys466 with Cys516. Asn630 carries N-linked (GlcNAc...) asparagine glycosylation. The cysteines at positions 660 and 676 are disulfide-linked. Position 754 (Asp754) interacts with heme b. His755 acts as the Proton acceptor in catalysis. Residue Asp756 coordinates Ca(2+). 2 disulfide bridges follow: Cys775-Cys785 and Cys779-Cys807. The N-linked (GlcNAc...) asparagine glycan is linked to Asn776. Thr839, Tyr841, Asp843, and Ser845 together coordinate Ca(2+). Asn894 is a glycosylation site (N-linked (GlcNAc...) asparagine). Heme b is bound by residues Glu913 and His1008. An LRR 7 repeat occupies 1085-1109 (ALDLAALNIQRGRDHGLPSWTEYRK). 2 disulfides stabilise this stretch: Cys1111/Cys1168 and Cys1209/Cys1236. Asn1112 and Asn1128 each carry an N-linked (GlcNAc...) asparagine glycan. An LRR 8 repeat occupies 1204–1225 (LSKIICTNGDDIDRIQRDIFVY). A glycan (N-linked (GlcNAc...) asparagine) is linked at Asn1228. The tract at residues 1266–1297 (IGGDEKAKRRKRRHHHSKKSCHDKGKRRKSGD) is disordered. The segment covering 1273–1295 (KRRKRRHHHSKKSCHDKGKRRKS) has biased composition (basic residues). Asn1300 carries an N-linked (GlcNAc...) asparagine glycan.

This sequence belongs to the peroxidase family. XPO subfamily. Requires Ca(2+) as cofactor. The cofactor is heme b. In terms of tissue distribution, expressed in vulval muscles and in some neurons including PVQ. Expressed in the hypodermis and in coelomocytes.

It is found in the secreted. Its subcellular location is the extracellular space. The protein resides in the extracellular matrix. It localises to the basement membrane. It carries out the reaction L-lysyl-[collagen] + L-methionyl-[collagen] + H2O2 = [collagen]-L-lysyl-N-S-L-methionyl-[collagen] + 2 H2O + H(+). The enzyme catalyses bromide + H2O2 = hypobromite + H2O. The catalysed reaction is L-lysyl-[collagen] + L-methionyl-[collagen] + hypobromite = [collagen]-L-lysyl-N-S-L-methionyl-[collagen] + bromide + H2O + H(+). It catalyses the reaction L-tyrosyl-[protein] + bromide + H2O2 + H(+) = 3-bromo-L-tyrosyl-[protein] + 2 H2O. It carries out the reaction hypobromite + L-tyrosyl-[protein] + H(+) = 3-bromo-L-tyrosyl-[protein] + H2O. Its function is as follows. Catalyzes the two-electron oxidation of bromide by hydrogen peroxide and generates hypobromite as a reactive intermediate which mediates the formation of sulfilimine cross-links between methionine and hydroxylysine residues within an uncross-linked collagen IV/COL4A1 NC1 hexamer. Required for embryonic morphogenesis playing a role in epidermal elongation at the twofold stage of embryonic development. Required post-embryonically for basement membrane integrity and muscle-epidermal attachments, and specifically in the function of basement membrane components such as the type IV collagens. May have a role in inhibiting axon regeneration. May functionally antagonize the peroxidasin pxn-1. This Caenorhabditis elegans protein is Peroxidasin homolog pxn-2.